A 283-amino-acid polypeptide reads, in one-letter code: Formamidopyrimidine-DNA glycosylase (283 aa).

The active-site Schiff-base intermediate with DNA is Pro-2. The Proton donor role is filled by Glu-3. Lys-58 (proton donor; for beta-elimination activity) is an active-site residue. Positions 100, 119, and 162 each coordinate DNA. The FPG-type zinc-finger motif lies at 247–283 (RVYGREGLPCVTPGCSGTVGRIVQSGRSSFHCPLCQR). The active-site Proton donor; for delta-elimination activity is Arg-273.

Belongs to the FPG family. As to quaternary structure, monomer. Requires Zn(2+) as cofactor.

It carries out the reaction Hydrolysis of DNA containing ring-opened 7-methylguanine residues, releasing 2,6-diamino-4-hydroxy-5-(N-methyl)formamidopyrimidine.. The enzyme catalyses 2'-deoxyribonucleotide-(2'-deoxyribose 5'-phosphate)-2'-deoxyribonucleotide-DNA = a 3'-end 2'-deoxyribonucleotide-(2,3-dehydro-2,3-deoxyribose 5'-phosphate)-DNA + a 5'-end 5'-phospho-2'-deoxyribonucleoside-DNA + H(+). Its function is as follows. Involved in base excision repair of DNA damaged by oxidation or by mutagenic agents. Acts as a DNA glycosylase that recognizes and removes damaged bases. Has a preference for oxidized purines, such as 7,8-dihydro-8-oxoguanine (8-oxoG). Has AP (apurinic/apyrimidinic) lyase activity and introduces nicks in the DNA strand. Cleaves the DNA backbone by beta-delta elimination to generate a single-strand break at the site of the removed base with both 3'- and 5'-phosphates. This Cereibacter sphaeroides (strain ATCC 17029 / ATH 2.4.9) (Rhodobacter sphaeroides) protein is Formamidopyrimidine-DNA glycosylase.